A 438-amino-acid polypeptide reads, in one-letter code: Trigger factor (438 aa).

In terms of domain architecture, PPIase FKBP-type spans 162-247; that stretch reads GDRVNINYQG…LNKVEAPKLP (86 aa).

It belongs to the FKBP-type PPIase family. Tig subfamily.

The protein localises to the cytoplasm. It carries out the reaction [protein]-peptidylproline (omega=180) = [protein]-peptidylproline (omega=0). Involved in protein export. Acts as a chaperone by maintaining the newly synthesized protein in an open conformation. Functions as a peptidyl-prolyl cis-trans isomerase. The protein is Trigger factor of Nitrosomonas eutropha (strain DSM 101675 / C91 / Nm57).